Consider the following 577-residue polypeptide: Urease subunit alpha (577 aa).

Residues 136–577 (GAIDCHVHLI…LPMAQRYFLF (442 aa)) form the Urease domain. The Ni(2+) site is built by H141, H143, and K224. K224 is subject to N6-carboxylysine. Residue H226 participates in substrate binding. The Ni(2+) site is built by H253 and H279. The Proton donor role is filled by H327. D367 is a binding site for Ni(2+).

The protein belongs to the metallo-dependent hydrolases superfamily. Urease alpha subunit family. Heterotrimer of UreA (gamma), UreB (beta) and UreC (alpha) subunits. Three heterotrimers associate to form the active enzyme. Ni cation is required as a cofactor. Post-translationally, carboxylation allows a single lysine to coordinate two nickel ions.

The protein resides in the cytoplasm. It catalyses the reaction urea + 2 H2O + H(+) = hydrogencarbonate + 2 NH4(+). Its pathway is nitrogen metabolism; urea degradation; CO(2) and NH(3) from urea (urease route): step 1/1. The chain is Urease subunit alpha from Mycobacterium marinum (strain ATCC BAA-535 / M).